The primary structure comprises 670 residues: Probable ATP-citrate synthase subunit 1 (670 aa).

The tract at residues 1–22 (MPSATTASTNGANGASASPAPG) is disordered. Residues 257–277 (LLRYQADPDCKILVLLGEVGG) and 308–334 (FKTEVQFGHAGAFANSQLETAATKNKS) each bind ATP. Residue glutamate 274 participates in Mg(2+) binding. The active-site Tele-phosphohistidine intermediate is the histidine 316. Residue 335-345 (MREAGFYVPDT) participates in CoA binding.

This sequence belongs to the succinate/malate CoA ligase alpha subunit family. Composed of two subunits.

The protein resides in the cytoplasm. It catalyses the reaction oxaloacetate + acetyl-CoA + ADP + phosphate = citrate + ATP + CoA. In terms of biological role, catalyzes the formation of cytosolic acetyl-CoA, which is mainly used for the biosynthesis of fatty acids and sterols. The chain is Probable ATP-citrate synthase subunit 1 from Neurospora crassa (strain ATCC 24698 / 74-OR23-1A / CBS 708.71 / DSM 1257 / FGSC 987).